We begin with the raw amino-acid sequence, 264 residues long: Glutamate racemase (264 aa).

Substrate is bound by residues D10–S11 and Y42–G43. The active-site Proton donor/acceptor is C73. Substrate is bound at residue N74 to T75. Catalysis depends on C181, which acts as the Proton donor/acceptor. A substrate-binding site is contributed by T182–H183.

It belongs to the aspartate/glutamate racemases family.

The catalysed reaction is L-glutamate = D-glutamate. Its pathway is cell wall biogenesis; peptidoglycan biosynthesis. Its function is as follows. Provides the (R)-glutamate required for cell wall biosynthesis. This chain is Glutamate racemase, found in Thermoanaerobacter pseudethanolicus (strain ATCC 33223 / 39E) (Clostridium thermohydrosulfuricum).